The primary structure comprises 135 residues: Protein NrdI (135 aa).

This sequence belongs to the NrdI family.

Its function is as follows. Probably involved in ribonucleotide reductase function. The sequence is that of Protein NrdI from Salmonella gallinarum (strain 287/91 / NCTC 13346).